A 452-amino-acid polypeptide reads, in one-letter code: GTPase Der (452 aa).

EngA-type G domains follow at residues 4–169 (PIVA…PSPD) and 177–352 (INVS…EEHR). Residues 10–17 (GRPNVGKS), 57–61 (DTGGL), 120–123 (NKCE), 183–190 (GRPNVGKS), 230–234 (DTAGI), and 295–298 (NKWD) contribute to the GTP site. The KH-like domain occupies 353-438 (RRVNTSVVNE…PIRLLWRGKK (86 aa)).

Belongs to the TRAFAC class TrmE-Era-EngA-EngB-Septin-like GTPase superfamily. EngA (Der) GTPase family. As to quaternary structure, associates with the 50S ribosomal subunit.

Its function is as follows. GTPase that plays an essential role in the late steps of ribosome biogenesis. In Crocosphaera subtropica (strain ATCC 51142 / BH68) (Cyanothece sp. (strain ATCC 51142)), this protein is GTPase Der.